The chain runs to 739 residues: NAD(P)H-quinone oxidoreductase subunit 5, chloroplastic (739 aa).

Helical transmembrane passes span 9-29 (WVIP…LFFI), 39-59 (IWAF…VQLS), 89-109 (IDPL…LVLI), 125-145 (FVYI…SNLI), 147-167 (IYFF…FWFT), 185-205 (GDFG…SLEF), 219-239 (NGIN…GAVA), 258-278 (TPIS…FLLA), 280-300 (LLPL…VGTI), 327-347 (LGYM…FHLI), 354-374 (ALLF…VGYS), 396-416 (STFL…CFWS), 425-445 (WLYS…TAFY), 542-562 (LFPL…GISF), 610-630 (SLAI…YSFF), and 719-739 (ISSY…FFLF).

The protein belongs to the complex I subunit 5 family. NDH is composed of at least 16 different subunits, 5 of which are encoded in the nucleus.

It localises to the plastid. It is found in the chloroplast thylakoid membrane. The catalysed reaction is a plastoquinone + NADH + (n+1) H(+)(in) = a plastoquinol + NAD(+) + n H(+)(out). It catalyses the reaction a plastoquinone + NADPH + (n+1) H(+)(in) = a plastoquinol + NADP(+) + n H(+)(out). Its function is as follows. NDH shuttles electrons from NAD(P)H:plastoquinone, via FMN and iron-sulfur (Fe-S) centers, to quinones in the photosynthetic chain and possibly in a chloroplast respiratory chain. The immediate electron acceptor for the enzyme in this species is believed to be plastoquinone. Couples the redox reaction to proton translocation, and thus conserves the redox energy in a proton gradient. This is NAD(P)H-quinone oxidoreductase subunit 5, chloroplastic (ndhF) from Agrostis stolonifera (Creeping bentgrass).